The primary structure comprises 89 residues: Large ribosomal subunit protein bL27 (89 aa).

Residues 1 to 22 (MAHKKGASSSRNGRDSNAQRLG) form a disordered region. Positions 7-19 (ASSSRNGRDSNAQ) are enriched in polar residues.

Belongs to the bacterial ribosomal protein bL27 family.

This Cutibacterium acnes (strain DSM 16379 / KPA171202) (Propionibacterium acnes) protein is Large ribosomal subunit protein bL27.